The sequence spans 516 residues: GMP synthase [glutamine-hydrolyzing] (516 aa).

The 191-residue stretch at 8–198 (KILILDFGSQ…VVNICGCDTL (191 aa)) folds into the Glutamine amidotransferase type-1 domain. C84 functions as the Nucleophile in the catalytic mechanism. Active-site residues include H172 and E174. A GMPS ATP-PPase domain is found at 199-391 (WNIENIIEND…LGLPYNMLYR (193 aa)). 226 to 232 (SGGVDSS) provides a ligand contact to ATP.

As to quaternary structure, homodimer.

It catalyses the reaction XMP + L-glutamine + ATP + H2O = GMP + L-glutamate + AMP + diphosphate + 2 H(+). Its pathway is purine metabolism; GMP biosynthesis; GMP from XMP (L-Gln route): step 1/1. In terms of biological role, catalyzes the synthesis of GMP from XMP. The protein is GMP synthase [glutamine-hydrolyzing] of Francisella tularensis subsp. tularensis (strain WY96-3418).